The sequence spans 177 residues: Flavodoxin (177 aa).

Residues 4–173 enclose the Flavodoxin-like domain; it reads IGIFFGSDTG…RIDSWLEKLK (170 aa).

The protein belongs to the flavodoxin family. Requires FMN as cofactor.

Low-potential electron donor to a number of redox enzymes. NifF is the electron donor to nitrogenase. This chain is Flavodoxin (nifF), found in Enterobacter agglomerans (Erwinia herbicola).